The primary structure comprises 588 residues: MTTTGSLPAQPSSTSPRTGNPSTDRALAMLLALVREGVTDVVLCPGSRSQALALVAAELERVDGVRLHVRIDERAAGFLALGLGVESGRPAPVITTSGTAVANLHPAVLEGWHSGVPMLLLTGDRPAELRGIASNQTTRQPGMFGDRVVVVDVPAPEETDEDLSRDARLARDAYRRARDERTPVHVNVAFRDPLSVAVPDLAEAVAEAHAAADAEAAAAPAPAGPTAADVLDLPHGPRTLVVAGHAAGEAAEELARAGGWPLAAEISSGSHFGPNLVVSFRELLARPGFGDRVERVIVFGHPTLTREVPLLVGREDVEAIVVGSTGGEDYDPRHRVTAHPAAVRVVGEPADPAEARRWTGTWVQASRAILDEASAAESAPLLPSGTTPAERRDFARAELAAVRADVTRRHLVRALWQATWPHDRLVLGASRLIREADRALPGKRVRVHANRGLAGIDGTISTGLGIALASQAGSGSAAAGITRVLVGDLTLLHDVGSLLIGTGERVPRIQVIVGNDGGGTIFDGLEVANTAAPAAIDRVMFTPQRVDLASLAKAYGWTHLRAATHGELEAALTTASGAPLLIEVPLVR.

A disordered region spans residues 1–22 (MTTTGSLPAQPSSTSPRTGNPS).

The protein belongs to the TPP enzyme family. MenD subfamily. Homodimer. Mg(2+) is required as a cofactor. The cofactor is Mn(2+). It depends on thiamine diphosphate as a cofactor.

It carries out the reaction isochorismate + 2-oxoglutarate + H(+) = 5-enolpyruvoyl-6-hydroxy-2-succinyl-cyclohex-3-ene-1-carboxylate + CO2. The protein operates within quinol/quinone metabolism; 1,4-dihydroxy-2-naphthoate biosynthesis; 1,4-dihydroxy-2-naphthoate from chorismate: step 2/7. It functions in the pathway quinol/quinone metabolism; menaquinone biosynthesis. Its function is as follows. Catalyzes the thiamine diphosphate-dependent decarboxylation of 2-oxoglutarate and the subsequent addition of the resulting succinic semialdehyde-thiamine pyrophosphate anion to isochorismate to yield 2-succinyl-5-enolpyruvyl-6-hydroxy-3-cyclohexene-1-carboxylate (SEPHCHC). The polypeptide is 2-succinyl-5-enolpyruvyl-6-hydroxy-3-cyclohexene-1-carboxylate synthase (Clavibacter michiganensis subsp. michiganensis (strain NCPPB 382)).